Reading from the N-terminus, the 323-residue chain is Putative ABC transporter substrate-binding lipoprotein YhfQ (323 aa).

An N-terminal signal peptide occupies residues 1–19 (MKKTLIILTVLLLSVLTAA). Residue cysteine 20 is the site of N-palmitoyl cysteine attachment. A lipid anchor (S-diacylglycerol cysteine) is attached at cysteine 20. Residues 51 to 322 (RVVVLELGFI…ELQKEMPAAK (272 aa)) enclose the Fe/B12 periplasmic-binding domain.

The protein belongs to the bacterial solute-binding protein 8 family. Interacts with FloT.

Its subcellular location is the cell membrane. The protein resides in the membrane raft. The protein is Putative ABC transporter substrate-binding lipoprotein YhfQ (yhfQ) of Bacillus subtilis (strain 168).